The following is a 145-amino-acid chain: Small ribosomal subunit protein uS12 (145 aa).

It belongs to the universal ribosomal protein uS12 family. In terms of assembly, component of the small ribosomal subunit. Mature ribosomes consist of a small (40S) and a large (60S) subunit. The 40S subunit contains about 32 different proteins and 1 molecule of RNA (18S). The 60S subunit contains 45 different proteins and 3 molecules of RNA (25S, 5.8S and 5S).

The protein resides in the cytoplasm. In terms of biological role, component of the ribosome, a large ribonucleoprotein complex responsible for the synthesis of proteins in the cell. The small ribosomal subunit (SSU) binds messenger RNAs (mRNAs) and translates the encoded message by selecting cognate aminoacyl-transfer RNA (tRNA) molecules. The large subunit (LSU) contains the ribosomal catalytic site termed the peptidyl transferase center (PTC), which catalyzes the formation of peptide bonds, thereby polymerizing the amino acids delivered by tRNAs into a polypeptide chain. The nascent polypeptides leave the ribosome through a tunnel in the LSU and interact with protein factors that function in enzymatic processing, targeting, and the membrane insertion of nascent chains at the exit of the ribosomal tunnel. The polypeptide is Small ribosomal subunit protein uS12 (RPS23A) (Candida albicans (strain SC5314 / ATCC MYA-2876) (Yeast)).